Reading from the N-terminus, the 392-residue chain is L-rhamnonate dehydratase (392 aa).

Substrate contacts are provided by histidine 22 and arginine 48. Aspartate 214, glutamate 240, and glutamate 268 together coordinate Mg(2+). Histidine 318 serves as the catalytic Proton acceptor. A substrate-binding site is contributed by glutamate 338.

It belongs to the mandelate racemase/muconate lactonizing enzyme family. RhamD subfamily. Homooctamer; tetramer of dimers. Mg(2+) is required as a cofactor.

It carries out the reaction L-rhamnonate = 2-dehydro-3-deoxy-L-rhamnonate + H2O. Its function is as follows. Catalyzes the dehydration of L-rhamnonate to 2-keto-3-deoxy-L-rhamnonate (KDR). The chain is L-rhamnonate dehydratase from Burkholderia ambifaria (strain MC40-6).